Consider the following 306-residue polypeptide: C-type lectin domain family 10 member A (306 aa).

The Cytoplasmic segment spans residues methionine 1–histidine 37. Residues leucine 38 to serine 58 traverse the membrane as a helical; Signal-anchor for type II membrane protein segment. Residues glutamine 59 to serine 306 lie on the Extracellular side of the membrane. N-linked (GlcNAc...) asparagine glycosylation is found at asparagine 76 and asparagine 168. Residues cysteine 174–methionine 300 form the C-type lectin domain. Cystine bridges form between cysteine 175–cysteine 186, cysteine 203–cysteine 298, and cysteine 276–cysteine 290.

In terms of assembly, homooligomer.

The protein localises to the membrane. Recognizes terminal galactose and N-acetylgalactosamine units. In Rattus norvegicus (Rat), this protein is C-type lectin domain family 10 member A (Clec10a).